Consider the following 284-residue polypeptide: D-tagatose-1,6-bisphosphate aldolase subunit GatY (284 aa).

Catalysis depends on Asp-82, which acts as the Proton donor. His-83 and His-180 together coordinate Zn(2+). Residue Gly-181 participates in dihydroxyacetone phosphate binding. His-208 provides a ligand contact to Zn(2+). Residues Gly-209–Ser-211 and Asn-230–Thr-233 contribute to the dihydroxyacetone phosphate site.

The protein belongs to the class II fructose-bisphosphate aldolase family. TagBP aldolase GatY subfamily. As to quaternary structure, forms a complex with GatZ. Zn(2+) serves as cofactor.

The catalysed reaction is D-tagatofuranose 1,6-bisphosphate = D-glyceraldehyde 3-phosphate + dihydroxyacetone phosphate. It functions in the pathway carbohydrate metabolism; D-tagatose 6-phosphate degradation; D-glyceraldehyde 3-phosphate and glycerone phosphate from D-tagatose 6-phosphate: step 2/2. In terms of biological role, catalytic subunit of the tagatose-1,6-bisphosphate aldolase GatYZ, which catalyzes the reversible aldol condensation of dihydroxyacetone phosphate (DHAP or glycerone-phosphate) with glyceraldehyde 3-phosphate (G3P) to produce tagatose 1,6-bisphosphate (TBP). Requires GatZ subunit for full activity and stability. Is involved in the catabolism of galactitol. This chain is D-tagatose-1,6-bisphosphate aldolase subunit GatY (gatY), found in Escherichia coli.